A 210-amino-acid chain; its full sequence is 3-hexulose-6-phosphate synthase (210 aa).

The protein belongs to the HPS/KGPDC family. HPS subfamily.

The enzyme catalyses D-ribulose 5-phosphate + formaldehyde = D-arabino-hex-3-ulose 6-phosphate. It participates in one-carbon metabolism; formaldehyde assimilation via RuMP pathway; D-fructose 6-phosphate from D-ribulose 5-phosphate and formaldehyde: step 1/2. Functionally, catalyzes the condensation of ribulose 5-phosphate with formaldehyde to form 3-hexulose 6-phosphate. The sequence is that of 3-hexulose-6-phosphate synthase from Staphylococcus aureus (strain NCTC 8325 / PS 47).